Reading from the N-terminus, the 298-residue chain is ATP synthase gamma chain (298 aa).

Belongs to the ATPase gamma chain family. As to quaternary structure, F-type ATPases have 2 components, CF(1) - the catalytic core - and CF(0) - the membrane proton channel. CF(1) has five subunits: alpha(3), beta(3), gamma(1), delta(1), epsilon(1). CF(0) has three main subunits: a, b and c.

Its subcellular location is the cell inner membrane. In terms of biological role, produces ATP from ADP in the presence of a proton gradient across the membrane. The gamma chain is believed to be important in regulating ATPase activity and the flow of protons through the CF(0) complex. The chain is ATP synthase gamma chain from Francisella tularensis subsp. tularensis (strain WY96-3418).